The chain runs to 197 residues: Probable GTP-binding protein EngB (197 aa).

Positions 26–197 (DLPEIALAGR…TSWDAILESL (172 aa)) constitute an EngB-type G domain. GTP is bound by residues 34 to 41 (GRSNVGKS), 61 to 65 (GKTQS), 79 to 82 (DVPG), 146 to 149 (TKAD), and 178 to 180 (FSS). Serine 41 and threonine 63 together coordinate Mg(2+).

It belongs to the TRAFAC class TrmE-Era-EngA-EngB-Septin-like GTPase superfamily. EngB GTPase family. Requires Mg(2+) as cofactor.

Functionally, necessary for normal cell division and for the maintenance of normal septation. The sequence is that of Probable GTP-binding protein EngB from Streptococcus mutans serotype c (strain ATCC 700610 / UA159).